Here is a 145-residue protein sequence, read N- to C-terminus: Protein X (145 aa).

A mitochondrial targeting sequence region spans residues 68 to 117; sequence PCALRFTSARRMETTVNAHQVLPKVLHKRTLGLSAMSTTDLEAYFKDCVF.

It belongs to the orthohepadnavirus protein X family. May form homodimer. May interact with host CEBPA, CFLAR, CREB1, DDB1, E4F1, HBXIP, HSPD1/HSP60, NFKBIA, POLR2E and SMAD4. Interacts with host SMC5-SMC6 complex and induces its degradation. Interacts with host TRPC4AP; leading to prevent ubiquitination of TRPC4AP. Interacts with host PLSCR1; this interaction promotes ubiquitination and degradation of HBx and impairs HBx-mediated cell proliferation. A fraction may be phosphorylated in insect cells and HepG2 cells, a human hepatoblastoma cell line. Phosphorylated in vitro by host protein kinase C or mitogen-activated protein kinase. N-acetylated in insect cells.

The protein resides in the host cytoplasm. It localises to the host nucleus. Its subcellular location is the host mitochondrion. Functionally, multifunctional protein that plays a role in silencing host antiviral defenses and promoting viral transcription. Does not seem to be essential for HBV infection. May be directly involved in development of cirrhosis and liver cancer (hepatocellular carcinoma). Most of cytosolic activities involve modulation of cytosolic calcium. The effect on apoptosis is controversial depending on the cell types in which the studies have been conducted. May induce apoptosis by localizing in mitochondria and causing loss of mitochondrial membrane potential. May also modulate apoptosis by binding host CFLAR, a key regulator of the death-inducing signaling complex (DISC). Promotes viral transcription by using the host E3 ubiquitin ligase DDB1 to target the SMC5-SMC6 complex to proteasomal degradation. This host complex would otherwise bind to viral episomal DNA, and prevents its transcription. Moderately stimulates transcription of many different viral and cellular transcription elements. Promoters and enhancers stimulated by HBx contain DNA binding sites for NF-kappa-B, AP-1, AP-2, c-EBP, ATF/CREB, or the calcium-activated factor NF-AT. The protein is Protein X of Homo sapiens (Human).